A 305-amino-acid chain; its full sequence is Protoheme IX farnesyltransferase (305 aa).

9 consecutive transmembrane segments (helical) span residues 38–58, 60–80, 110–130, 131–151, 161–181, 185–205, 227–247, 249–269, and 285–305; these read FITT…SFLG, LDIV…SCAI, AYAF…MTTV, TSAV…TMWS, IGSV…TGTI, AWVL…SLAI, VTKR…FFLG, LGWP…VIGL, and FVYS…ITLF.

Belongs to the UbiA prenyltransferase family. Protoheme IX farnesyltransferase subfamily. Interacts with CtaA.

The protein localises to the cell membrane. It carries out the reaction heme b + (2E,6E)-farnesyl diphosphate + H2O = Fe(II)-heme o + diphosphate. It participates in porphyrin-containing compound metabolism; heme O biosynthesis; heme O from protoheme: step 1/1. In terms of biological role, converts heme B (protoheme IX) to heme O by substitution of the vinyl group on carbon 2 of heme B porphyrin ring with a hydroxyethyl farnesyl side group. This is Protoheme IX farnesyltransferase from Bacillus pumilus (strain SAFR-032).